The chain runs to 541 residues: Apolipoprotein N-acyltransferase (541 aa).

6 helical membrane-spanning segments follow: residues 21–41 (LSGFVSILGAACGYGFFWYSL), 54–74 (LFVSCFFWIFTIEGIHFSWML), 82–102 (LIYLVWLTLITILSVLFSGFS), 116–136 (FLWSLPGVWVAIEMLRFYGIF), 157–177 (FGGFLGWAGQSFAVIAVNMSF), and 189–209 (MLWVLTLLLPYTFGAIHYEYL). A CN hydrolase domain is found at 220–499 (LRVAVVQPAH…SGVLETSLPL (280 aa)). Catalysis depends on glutamate 264, which acts as the Proton acceptor. Residue lysine 349 is part of the active site. The active-site Nucleophile is the cysteine 404. The chain crosses the membrane as a helical span at residues 512-532 (YPMILIAFCAVSYLGGGFLGY).

The protein belongs to the CN hydrolase family. Apolipoprotein N-acyltransferase subfamily.

It localises to the cell inner membrane. The enzyme catalyses N-terminal S-1,2-diacyl-sn-glyceryl-L-cysteinyl-[lipoprotein] + a glycerophospholipid = N-acyl-S-1,2-diacyl-sn-glyceryl-L-cysteinyl-[lipoprotein] + a 2-acyl-sn-glycero-3-phospholipid + H(+). The protein operates within protein modification; lipoprotein biosynthesis (N-acyl transfer). Catalyzes the phospholipid dependent N-acylation of the N-terminal cysteine of apolipoprotein, the last step in lipoprotein maturation. The chain is Apolipoprotein N-acyltransferase from Chlamydia pneumoniae (Chlamydophila pneumoniae).